Here is a 378-residue protein sequence, read N- to C-terminus: Ribosomal RNA large subunit methyltransferase G (378 aa).

This sequence belongs to the methyltransferase superfamily. RlmG family.

The protein resides in the cytoplasm. The catalysed reaction is guanosine(1835) in 23S rRNA + S-adenosyl-L-methionine = N(2)-methylguanosine(1835) in 23S rRNA + S-adenosyl-L-homocysteine + H(+). In terms of biological role, specifically methylates the guanine in position 1835 (m2G1835) of 23S rRNA. This is Ribosomal RNA large subunit methyltransferase G from Escherichia coli O1:K1 / APEC.